Here is a 389-residue protein sequence, read N- to C-terminus: Chalcone synthase (389 aa).

Cys-164 is a catalytic residue.

Belongs to the thiolase-like superfamily. Chalcone/stilbene synthases family.

It catalyses the reaction (E)-4-coumaroyl-CoA + 3 malonyl-CoA + 3 H(+) = 2',4,4',6'-tetrahydroxychalcone + 3 CO2 + 4 CoA. It functions in the pathway secondary metabolite biosynthesis; flavonoid biosynthesis. In terms of biological role, the primary product of this enzyme is 4,2',4',6'-tetrahydroxychalcone (also termed naringenin-chalcone or chalcone) which can under specific conditions spontaneously isomerize into naringenin. This chain is Chalcone synthase (CHS1), found in Casuarina glauca (Swamp oak).